The primary structure comprises 494 residues: Glutamate--tRNA ligase (494 aa).

Positions 9–19 match the 'HIGH' region motif; sequence PSPTGDPHVGT. Positions 250–254 match the 'KMSKS' region motif; that stretch reads KLSKR. An ATP-binding site is contributed by Lys-253.

This sequence belongs to the class-I aminoacyl-tRNA synthetase family. Glutamate--tRNA ligase type 1 subfamily. As to quaternary structure, monomer.

The protein resides in the cytoplasm. The enzyme catalyses tRNA(Glu) + L-glutamate + ATP = L-glutamyl-tRNA(Glu) + AMP + diphosphate. Functionally, catalyzes the attachment of glutamate to tRNA(Glu) in a two-step reaction: glutamate is first activated by ATP to form Glu-AMP and then transferred to the acceptor end of tRNA(Glu). The sequence is that of Glutamate--tRNA ligase from Alcanivorax borkumensis (strain ATCC 700651 / DSM 11573 / NCIMB 13689 / SK2).